Here is a 122-residue protein sequence, read N- to C-terminus: Large ribosomal subunit protein bL19 (122 aa).

It belongs to the bacterial ribosomal protein bL19 family.

In terms of biological role, this protein is located at the 30S-50S ribosomal subunit interface and may play a role in the structure and function of the aminoacyl-tRNA binding site. The sequence is that of Large ribosomal subunit protein bL19 from Novosphingobium aromaticivorans (strain ATCC 700278 / DSM 12444 / CCUG 56034 / CIP 105152 / NBRC 16084 / F199).